The chain runs to 190 residues: RNA pyrophosphohydrolase (190 aa).

Residues 6-149 form the Nudix hydrolase domain; that stretch reads GYRPNVGIVL…KRGVYARALC (144 aa). The short motif at 38–59 is the Nudix box element; that stretch reads GGMHSDETPVEAMYRELNEETG.

It belongs to the Nudix hydrolase family. RppH subfamily. The cofactor is a divalent metal cation.

Accelerates the degradation of transcripts by removing pyrophosphate from the 5'-end of triphosphorylated RNA, leading to a more labile monophosphorylated state that can stimulate subsequent ribonuclease cleavage. This Xylella fastidiosa (strain 9a5c) protein is RNA pyrophosphohydrolase.